A 159-amino-acid chain; its full sequence is Probable RNA-binding protein EIF1AD (159 aa).

The S1-like domain occupies 18–93 (MMEDDYALPT…VKAEICKILT (76 aa)). A disordered region spans residues 109 to 159 (KFTKKPVQEEATSQNKDDSDFEDDLLPNTNRPVNRDSSDEEEDEETSSEED). The segment covering 146-159 (SDEEEDEETSSEED) has biased composition (acidic residues).

This sequence belongs to the EIF1AD family.

This is Probable RNA-binding protein EIF1AD from Drosophila melanogaster (Fruit fly).